We begin with the raw amino-acid sequence, 125 residues long: Large ribosomal subunit protein bL12 (125 aa).

Belongs to the bacterial ribosomal protein bL12 family. Homodimer. Part of the ribosomal stalk of the 50S ribosomal subunit. Forms a multimeric L10(L12)X complex, where L10 forms an elongated spine to which 2 to 4 L12 dimers bind in a sequential fashion. Binds GTP-bound translation factors.

In terms of biological role, forms part of the ribosomal stalk which helps the ribosome interact with GTP-bound translation factors. Is thus essential for accurate translation. The polypeptide is Large ribosomal subunit protein bL12 (Gluconobacter oxydans (strain 621H) (Gluconobacter suboxydans)).